The primary structure comprises 329 residues: Biotin synthase (329 aa).

In terms of domain architecture, Radical SAM core spans 36–260; that stretch reads GEIQLCTLLS…VAVARITMPK (225 aa). Cysteine 51, cysteine 55, and cysteine 58 together coordinate [4Fe-4S] cluster. [2Fe-2S] cluster contacts are provided by cysteine 95, cysteine 126, cysteine 186, and arginine 264.

This sequence belongs to the radical SAM superfamily. Biotin synthase family. In terms of assembly, homodimer. The cofactor is [4Fe-4S] cluster. Requires [2Fe-2S] cluster as cofactor.

The catalysed reaction is (4R,5S)-dethiobiotin + (sulfur carrier)-SH + 2 reduced [2Fe-2S]-[ferredoxin] + 2 S-adenosyl-L-methionine = (sulfur carrier)-H + biotin + 2 5'-deoxyadenosine + 2 L-methionine + 2 oxidized [2Fe-2S]-[ferredoxin]. The protein operates within cofactor biosynthesis; biotin biosynthesis; biotin from 7,8-diaminononanoate: step 2/2. In terms of biological role, catalyzes the conversion of dethiobiotin (DTB) to biotin by the insertion of a sulfur atom into dethiobiotin via a radical-based mechanism. This Sphingopyxis alaskensis (strain DSM 13593 / LMG 18877 / RB2256) (Sphingomonas alaskensis) protein is Biotin synthase.